Here is a 467-residue protein sequence, read N- to C-terminus: MFEQPSSTTNTTTSSGSGSDSNHYFELGPRNPINQAHPTSVIVPPRQHHHQIHQQQTDNSPLTPCTPYYPSNAYGLPLFFGTDFLQFQPSDIPSPLTPNISSPLTPHPFGPIPAIPTNQIYNRTFTDFYSTAASSPMVQYSTVKKSSAGRKPKEEDNMEDDDDDKRLKRRQRNKEAAARCRQRRIDLMKELQDQVNDFKNSNDKKMAECNNIRNKLNSLKNYLETHDCKLSREERTHEINRLIIPPSTVPPSQPYLQHSLRVHPPRADSVPYSIRSGHSSSSSEQHSPVEDYKPSIDQLLLPPISCIQNIKDRNINSMPPPALPASTSAAGIHVITSIPVSHANSLHGRSENVFAEPERKIPKIELDQTLTSLTMPDDVERPSALPTLSRIVENQPITTPSRPFRLGGEYQNQTPQSTGNGLFGGPPGPFDLLSSNTGLTPSGQPTMNFVSTPTPIQPHPDADLRPL.

Over residues 1 to 22 the composition is skewed to low complexity; the sequence is MFEQPSSTTNTTTSSGSGSDSN. Disordered regions lie at residues 1–38 and 139–179; these read MFEQPSSTTNTTTSSGSGSDSNHYFELGPRNPINQAHP and QYST…AAAR. One can recognise a bZIP domain in the interval 163-226; that stretch reads DDKRLKRRQR…NSLKNYLETH (64 aa). The interval 165-205 is basic motif; it reads KRLKRRQRNKEAAARCRQRRIDLMKELQDQVNDFKNSNDKK. The tract at residues 212 to 219 is leucine-zipper; that stretch reads IRNKLNSL. Disordered stretches follow at residues 266-291 and 395-467; these read RADSVPYSIRSGHSSSSSEQHSPVED and QPIT…LRPL. A compositionally biased stretch (low complexity) spans 273–286; the sequence is SIRSGHSSSSSEQH. Residues 434 to 454 are compositionally biased toward polar residues; it reads SSNTGLTPSGQPTMNFVSTPT. Residues threonine 440, threonine 452, and threonine 454 each carry the phosphothreonine modification.

It belongs to the bZIP family. Fos subfamily. In terms of assembly, homodimer. Heterodimer; with jun-1. Interacts with kgb-1 and hda-1. In terms of processing, may be phosphorylated by kgb-1. Phosphorylation at Thr-440 increases sensitivity to heavy metal stress. Phosphorylation inhibits homodimer formation, and promotes association with target promoters. Expressed in anchor cells. Isoform a is expressed in somatic gonad cells that neighbor anchor cells. Isoform b is expressed in vulval cells, the uterine cells that neighbor anchor cells and the spermatheca.

It is found in the nucleus. Functionally, developmentally regulated transcription factor which binds and recognizes the enhancer DNA sequence 5'-TGA[CG]TCA-3'. Plays a role the development of the reproductive system, controlling events including anchor cell (AC) fusion and invasion. Regulates downstream transcriptional targets, including zmp-1, cdh-3, him-4 and mig10b, to promote the removal of the gonadal basement membrane during AC invasion. Regulates aff-1 expression to promote AC fusion. With jun-1 regulates egl-1 and lin-12 expression to allow uterine cell specification and development. Its function is as follows. Required for ovulation. Controls plc-1 expression in the spermatheca to regulate spermathecal valve dilation. Acts with hda-1 as a downstream repressor of the kgb-1 mediated stress response pathway that transcriptionally represses genes involved in the response to heavy metals, such as kreg-1. In Caenorhabditis elegans, this protein is Transcription factor fos-1.